A 419-amino-acid chain; its full sequence is Light-independent protochlorophyllide reductase subunit N (419 aa).

C17, C42, and C103 together coordinate [4Fe-4S] cluster.

Belongs to the BchN/ChlN family. As to quaternary structure, protochlorophyllide reductase is composed of three subunits; ChlL, ChlN and ChlB. Forms a heterotetramer of two ChlB and two ChlN subunits. [4Fe-4S] cluster is required as a cofactor.

The catalysed reaction is chlorophyllide a + oxidized 2[4Fe-4S]-[ferredoxin] + 2 ADP + 2 phosphate = protochlorophyllide a + reduced 2[4Fe-4S]-[ferredoxin] + 2 ATP + 2 H2O. It participates in porphyrin-containing compound metabolism; chlorophyll biosynthesis (light-independent). In terms of biological role, component of the dark-operative protochlorophyllide reductase (DPOR) that uses Mg-ATP and reduced ferredoxin to reduce ring D of protochlorophyllide (Pchlide) to form chlorophyllide a (Chlide). This reaction is light-independent. The NB-protein (ChlN-ChlB) is the catalytic component of the complex. This chain is Light-independent protochlorophyllide reductase subunit N, found in Prochlorococcus marinus (strain NATL1A).